The following is a 227-amino-acid chain: Zinc finger protein 511 (227 aa).

3 C2H2-type zinc fingers span residues 80–105 (FTCQVAGCCQVFAAIEDYQHHYHMMH), 107–130 (NTCSFCNRAFPSGHLLDVHILEWH), and 144–169 (YQCLVESCPEKFKTSQDRKDHMVRLH). Residues 180–204 (PKTNRGPAMPAAADAATRAPTDDSD) form a disordered region. Positions 186–198 (PAMPAAADAATRA) are enriched in low complexity.

Belongs to the krueppel C2H2-type zinc-finger protein family.

It is found in the nucleus. May be involved in transcriptional regulation. In Mus musculus (Mouse), this protein is Zinc finger protein 511 (Znf511).